Here is a 562-residue protein sequence, read N- to C-terminus: Protein wntless (562 aa).

The Cytoplasmic segment spans residues 1–13 (MSGTILENLSGRK). A helical membrane pass occupies residues 14–34 (LSILVSSLMLCQVACFLMGGL). At 35 to 239 (YAPVPAGHQT…AIHQNGGFTQ (205 aa)) the chain is on the lumenal side. N-linked (GlcNAc...) asparagine glycans are attached at residues asparagine 58 and asparagine 103. A helical transmembrane segment spans residues 240–260 (VWLLLKTLLFPFVVGIMIWFW). Residues 261 to 270 (RRVHILQRSP) are Cytoplasmic-facing. The chain crosses the membrane as a helical span at residues 271–291 (ALLEYMLLYLGGALSFLNLPL). The Lumenal segment spans residues 292–311 (EYLTLSIEMPYMLLLSDVRQ). A helical transmembrane segment spans residues 312–332 (GIFYAMLLSFWLVFAGEHMLI). Residues 333–344 (QDTPNKSTIRSR) are Cytoplasmic-facing. A helical transmembrane segment spans residues 345-365 (YWKHLSAVVVGCISLFVFDIC). The Lumenal segment spans residues 366–390 (ERGVQLRNPFYSIWTTPLGAKVAMS). Residues 391 to 411 (FIVLAGVSAAIYFLFLCFMVW) form a helical membrane-spanning segment. Topologically, residues 412-441 (KVFKDIGDKRTSLPSMSQARRLHYEGLIYR) are cytoplasmic. A helical membrane pass occupies residues 442-462 (FKFLMLATLLCAGLTVAGFIM). The Lumenal portion of the chain corresponds to 463 to 482 (GQMAEGHWKWNEDIEIQLTS). Residues 483–503 (AFLTGVYGMWNIYIFALIILY) traverse the membrane as a helical segment. Residues 504–562 (APSHKQWPTMRHSDETTQSNENIVASAASEEIEFSNLPSDSNPSEISSLTSFTRKVAFD) are Cytoplasmic-facing.

It belongs to the wntless family. Interacts with wg; in the Golgi. Interacts with Vps35, a component of the retromer complex; wls stability is regulated by Vps35.

It localises to the presynaptic cell membrane. It is found in the postsynaptic cell membrane. The protein localises to the cell membrane. Its subcellular location is the endoplasmic reticulum membrane. The protein resides in the endosome membrane. It localises to the golgi apparatus membrane. A segment polarity gene required for wingless (wg)-dependent patterning processes, acting in both wg-sending cells and wg-target cells. In non-neuronal cells wls directs wg secretion. The wls traffic loop encompasses the Golgi, the cell surface, an endocytic compartment and a retrograde route leading back to the Golgi, and involves clathrin-mediated endocytosis and the retromer complex (a conserved protein complex consisting of Vps35 and Vps26). In neuronal cells (the larval motorneuron NMJ), the wg signal moves across the synapse via the release of wls-containing exosome-like vesicles. Postsynaptic wls is required for the trafficking of fz2 through the fz2-interacting protein Grip. This is Protein wntless from Drosophila virilis (Fruit fly).